We begin with the raw amino-acid sequence, 547 residues long: Glucose-6-phosphate isomerase (547 aa).

Glu-351 (proton donor) is an active-site residue. Catalysis depends on residues His-382 and Lys-509.

Belongs to the GPI family.

The protein localises to the cytoplasm. The catalysed reaction is alpha-D-glucose 6-phosphate = beta-D-fructose 6-phosphate. It participates in carbohydrate biosynthesis; gluconeogenesis. It functions in the pathway carbohydrate degradation; glycolysis; D-glyceraldehyde 3-phosphate and glycerone phosphate from D-glucose: step 2/4. Its function is as follows. Catalyzes the reversible isomerization of glucose-6-phosphate to fructose-6-phosphate. In Coxiella burnetii (strain CbuK_Q154) (Coxiella burnetii (strain Q154)), this protein is Glucose-6-phosphate isomerase.